Here is a 958-residue protein sequence, read N- to C-terminus: Dermatan-sulfate epimerase (958 aa).

The N-terminal stretch at 1-22 (MRTHTRGAPSVFFIYLLCFVSA) is a signal peptide. Residues 23-902 (YITDENPEVM…APSLSASYTR (880 aa)) are Lumenal-facing. Asparagine 183 carries an N-linked (GlcNAc...) (complex) asparagine glycan. The Proton donor role is filled by histidine 205. The active site involves tyrosine 261. N-linked (GlcNAc...) (high mannose) asparagine glycosylation occurs at asparagine 336. The N-linked (GlcNAc...) (complex) asparagine glycan is linked to asparagine 411. Positions 452 and 470 each coordinate Mn(2+). The active site involves tyrosine 473. Asparagine 481 contacts Mn(2+). Residue asparagine 642 is glycosylated (N-linked (GlcNAc...) (complex) asparagine). Asparagine 648 carries an N-linked (GlcNAc...) (paucimannose) asparagine glycan. Residues 903–923 (LFLILNIAIFFVMLAMQLTYF) form a helical membrane-spanning segment. The Cytoplasmic portion of the chain corresponds to 924 to 933 (QRAQSLHGQR). The helical transmembrane segment at 934–954 (CLYAVLLIDSCILLWLYSSCS) threads the bilayer. Topologically, residues 955 to 958 (QSQC) are lumenal.

It belongs to the dermatan-sulfate isomerase family. Mn(2+) serves as cofactor. Post-translationally, N-glycosylated. Glycosylation is important for enzymatic activity. In terms of tissue distribution, ubiquitously expressed with higher expression in kidney and ovary and lower expression in brain, colon and thymus. Also expressed in renal cell carcinomas, brain tumors, and in a part of melanomas and adenocarcinomas from organs other than the breast. Expressed in squamous cell carcinomas (SCC), glioma, and some adenocarcinoma cell lines, but not in breast cancer cell lines or any normal tissues (at protein level).

It localises to the endoplasmic reticulum membrane. The protein resides in the golgi apparatus membrane. The protein localises to the cytoplasmic vesicle membrane. Its subcellular location is the microsome membrane. It carries out the reaction chondroitin 4'-sulfate = dermatan 4'-sulfate. It functions in the pathway glycan metabolism; chondroitin sulfate biosynthesis. It participates in glycan metabolism; heparan sulfate biosynthesis. Its function is as follows. Converts D-glucuronic acid to L-iduronic acid (IdoUA) residues. Plays an important role in the biosynthesis of the glycosaminoglycan/mucopolysaccharide dermatan sulfate. This chain is Dermatan-sulfate epimerase (DSE), found in Homo sapiens (Human).